A 302-amino-acid chain; its full sequence is Citrate lyase subunit beta (302 aa).

Positions 76 and 139 each coordinate substrate. Mg(2+)-binding residues include Glu-139 and Asp-166.

Belongs to the HpcH/HpaI aldolase family. Citrate lyase beta subunit subfamily. As to quaternary structure, oligomer with a subunit composition of (alpha,beta,gamma)6. It depends on Mg(2+) as a cofactor.

The protein localises to the cytoplasm. It catalyses the reaction citrate = oxaloacetate + acetate. It carries out the reaction (3S)-citryl-CoA = oxaloacetate + acetyl-CoA. In terms of biological role, represents a citryl-ACP lyase. The sequence is that of Citrate lyase subunit beta (citE) from Escherichia coli O6:H1 (strain CFT073 / ATCC 700928 / UPEC).